Reading from the N-terminus, the 111-residue chain is Tubulin beta chain (111 aa).

The tract at residues 82–111 (SEYQQYQDATAEDEGEFDEEEAEGEGQEYA) is disordered. Residues 91–111 (TAEDEGEFDEEEAEGEGQEYA) show a composition bias toward acidic residues.

This sequence belongs to the tubulin family. As to quaternary structure, dimer of alpha and beta chains. A typical microtubule is a hollow water-filled tube with an outer diameter of 25 nm and an inner diameter of 15 nM. Alpha-beta heterodimers associate head-to-tail to form protofilaments running lengthwise along the microtubule wall with the beta-tubulin subunit facing the microtubule plus end conferring a structural polarity. Microtubules usually have 13 protofilaments but different protofilament numbers can be found in some organisms and specialized cells. It depends on Mg(2+) as a cofactor.

The protein resides in the cytoplasm. Its subcellular location is the cytoskeleton. Its function is as follows. Tubulin is the major constituent of microtubules, a cylinder consisting of laterally associated linear protofilaments composed of alpha- and beta-tubulin heterodimers. Microtubules grow by the addition of GTP-tubulin dimers to the microtubule end, where a stabilizing cap forms. Below the cap, tubulin dimers are in GDP-bound state, owing to GTPase activity of alpha-tubulin. In Lymnaea stagnalis (Great pond snail), this protein is Tubulin beta chain.